We begin with the raw amino-acid sequence, 715 residues long: Polyribonucleotide nucleotidyltransferase (715 aa).

D498 and D504 together coordinate Mg(2+). Residues 565–625 enclose the KH domain; sequence PKVCMMQIKP…ETVKKTVAFI (61 aa). Residues 635–706 form the S1 motif domain; sequence GTCYQASILR…DRGRIDFLLL (72 aa).

Belongs to the polyribonucleotide nucleotidyltransferase family. Requires Mg(2+) as cofactor.

The protein resides in the cytoplasm. The enzyme catalyses RNA(n+1) + phosphate = RNA(n) + a ribonucleoside 5'-diphosphate. Its function is as follows. Involved in mRNA degradation. Catalyzes the phosphorolysis of single-stranded polyribonucleotides processively in the 3'- to 5'-direction. This is Polyribonucleotide nucleotidyltransferase from Onion yellows phytoplasma (strain OY-M).